Here is a 299-residue protein sequence, read N- to C-terminus: Ribosomal protein L11 methyltransferase (299 aa).

The S-adenosyl-L-methionine site is built by T140, G161, D183, and N232.

This sequence belongs to the methyltransferase superfamily. PrmA family.

Its subcellular location is the cytoplasm. The enzyme catalyses L-lysyl-[protein] + 3 S-adenosyl-L-methionine = N(6),N(6),N(6)-trimethyl-L-lysyl-[protein] + 3 S-adenosyl-L-homocysteine + 3 H(+). Functionally, methylates ribosomal protein L11. This chain is Ribosomal protein L11 methyltransferase, found in Synechococcus elongatus (strain ATCC 33912 / PCC 7942 / FACHB-805) (Anacystis nidulans R2).